The sequence spans 340 residues: GTP 3',8-cyclase (340 aa).

In terms of domain architecture, Radical SAM core spans 20 to 246 (RFERQYVYLR…PKALSDGPAK (227 aa)). Residue Arg29 coordinates GTP. Residues Cys36 and Cys40 each contribute to the [4Fe-4S] cluster site. Tyr42 contributes to the S-adenosyl-L-methionine binding site. Cys43 lines the [4Fe-4S] cluster pocket. Residue Arg79 participates in GTP binding. Gly83 serves as a coordination point for S-adenosyl-L-methionine. Thr110 provides a ligand contact to GTP. An S-adenosyl-L-methionine-binding site is contributed by Ser134. GTP is bound at residue Lys171. An S-adenosyl-L-methionine-binding site is contributed by Met205. [4Fe-4S] cluster-binding residues include Cys268 and Cys271. 273–275 (RLR) serves as a coordination point for GTP. Cys285 lines the [4Fe-4S] cluster pocket.

The protein belongs to the radical SAM superfamily. MoaA family. In terms of assembly, monomer and homodimer. [4Fe-4S] cluster is required as a cofactor.

It catalyses the reaction GTP + AH2 + S-adenosyl-L-methionine = (8S)-3',8-cyclo-7,8-dihydroguanosine 5'-triphosphate + 5'-deoxyadenosine + L-methionine + A + H(+). The protein operates within cofactor biosynthesis; molybdopterin biosynthesis. Functionally, catalyzes the cyclization of GTP to (8S)-3',8-cyclo-7,8-dihydroguanosine 5'-triphosphate. The protein is GTP 3',8-cyclase of Actinobacillus pleuropneumoniae serotype 3 (strain JL03).